The primary structure comprises 106 residues: ATP-dependent Clp protease adapter protein ClpS (106 aa).

Belongs to the ClpS family. As to quaternary structure, binds to the N-terminal domain of the chaperone ClpA.

Its function is as follows. Involved in the modulation of the specificity of the ClpAP-mediated ATP-dependent protein degradation. This Aliivibrio salmonicida (strain LFI1238) (Vibrio salmonicida (strain LFI1238)) protein is ATP-dependent Clp protease adapter protein ClpS.